Here is a 150-residue protein sequence, read N- to C-terminus: Large ribosomal subunit protein bL9 (150 aa).

This sequence belongs to the bacterial ribosomal protein bL9 family.

In terms of biological role, binds to the 23S rRNA. This is Large ribosomal subunit protein bL9 from Shewanella woodyi (strain ATCC 51908 / MS32).